The chain runs to 504 residues: ATP synthase subunit alpha, chloroplastic (504 aa).

An ATP-binding site is contributed by 170–177 (GDRQTGKT). Threonine 257 carries the phosphothreonine modification.

The protein belongs to the ATPase alpha/beta chains family. F-type ATPases have 2 components, CF(1) - the catalytic core - and CF(0) - the membrane proton channel. CF(1) has five subunits: alpha(3), beta(3), gamma(1), delta(1), epsilon(1). CF(0) has four main subunits: a, b, b' and c.

The protein localises to the plastid. It is found in the chloroplast thylakoid membrane. The enzyme catalyses ATP + H2O + 4 H(+)(in) = ADP + phosphate + 5 H(+)(out). In terms of biological role, produces ATP from ADP in the presence of a proton gradient across the membrane. The alpha chain is a regulatory subunit. In Nasturtium officinale (Watercress), this protein is ATP synthase subunit alpha, chloroplastic.